A 191-amino-acid chain; its full sequence is dTTP/UTP pyrophosphatase (191 aa).

The Proton acceptor role is filled by aspartate 69.

The protein belongs to the Maf family. YhdE subfamily. A divalent metal cation is required as a cofactor.

It is found in the cytoplasm. It carries out the reaction dTTP + H2O = dTMP + diphosphate + H(+). It catalyses the reaction UTP + H2O = UMP + diphosphate + H(+). Its function is as follows. Nucleoside triphosphate pyrophosphatase that hydrolyzes dTTP and UTP. May have a dual role in cell division arrest and in preventing the incorporation of modified nucleotides into cellular nucleic acids. This Desulforamulus reducens (strain ATCC BAA-1160 / DSM 100696 / MI-1) (Desulfotomaculum reducens) protein is dTTP/UTP pyrophosphatase.